Here is a 367-residue protein sequence, read N- to C-terminus: Uroporphyrinogen decarboxylase (367 aa).

Met-1 is subject to N-acetylmethionine. Residues Arg-37, Ala-39, Arg-41, Arg-50, Asp-86, Tyr-164, Ser-219, and His-339 each coordinate coproporphyrinogen I. Residues Arg-37, Ala-39, and Arg-41 each coordinate coproporphyrinogen III. Coproporphyrinogen III-binding residues include Asp-86, Tyr-164, Ser-219, and His-339.

Belongs to the uroporphyrinogen decarboxylase family. Homodimer.

Its subcellular location is the cytoplasm. The protein localises to the cytosol. It carries out the reaction uroporphyrinogen III + 4 H(+) = coproporphyrinogen III + 4 CO2. The catalysed reaction is uroporphyrinogen I + 4 H(+) = coproporphyrinogen I + 4 CO2. It participates in porphyrin-containing compound metabolism; protoporphyrin-IX biosynthesis; coproporphyrinogen-III from 5-aminolevulinate: step 4/4. Its function is as follows. Catalyzes the sequential decarboxylation of the four acetate side chains of uroporphyrinogen to form coproporphyrinogen and participates in the fifth step in the heme biosynthetic pathway. Isomer I or isomer III of uroporphyrinogen may serve as substrate, but only coproporphyrinogen III can ultimately be converted to heme. In vitro also decarboxylates pentacarboxylate porphyrinogen I. The protein is Uroporphyrinogen decarboxylase of Pongo abelii (Sumatran orangutan).